Here is a 277-residue protein sequence, read N- to C-terminus: Urease accessory protein UreD (277 aa).

Belongs to the UreD family. UreD, UreF and UreG form a complex that acts as a GTP-hydrolysis-dependent molecular chaperone, activating the urease apoprotein by helping to assemble the nickel containing metallocenter of UreC. The UreE protein probably delivers the nickel.

Its subcellular location is the cytoplasm. In terms of biological role, required for maturation of urease via the functional incorporation of the urease nickel metallocenter. The sequence is that of Urease accessory protein UreD from Rhodopseudomonas palustris (strain BisB18).